A 206-amino-acid polypeptide reads, in one-letter code: Probable glutathione peroxidase 3, mitochondrial (206 aa).

The N-terminal 12 residues, 1-12 (MPRSSRWVNQRA), are a transit peptide targeting the mitochondrion. The active site involves Cys-80.

Belongs to the glutathione peroxidase family. Interacts with ABI1 and ABI2. As to expression, ubiquitous.

The protein localises to the mitochondrion. The enzyme catalyses 2 glutathione + H2O2 = glutathione disulfide + 2 H2O. Its activity is regulated as follows. The redox states are modulated by H(2)O(2). Functionally, may constitute a glutathione peroxidase-like protective system against oxidative stresses. Involved positively in abscisic acid (ABA) signaling pathway that regulates numerous ABA responses, such as stomatal closure, seed germination and inhibition of vegetative growth. Oxidizes and represses target proteins (e.g. the phosphatase activity of ABI1 and ABI2) when oxidized by H(2)O(2), probably after ABA signaling. Modulates the calcium channel activity in guard cells in response to ABA or H(2)O(2). Confers tolerance to drought stress, by enhancing the ABA-dependent stomatal closure. The chain is Probable glutathione peroxidase 3, mitochondrial (GPX3) from Arabidopsis thaliana (Mouse-ear cress).